The primary structure comprises 308 residues: Heme A synthase (308 aa).

Residues 1 to 8 (MFKKRNLK) lie on the Cytoplasmic side of the membrane. Residues 9–29 (WLSILATVIMAWVQLGGALVT) form a helical membrane-spanning segment. The Extracellular portion of the chain corresponds to 30 to 67 (KTGSENGCGASWPLCHGALLPQNLPIATIIELSHRATS). Cysteines 37 and 44 form a disulfide. E60 is a catalytic residue. Residue H63 participates in heme o binding. The chain crosses the membrane as a helical span at residues 68–88 (ALSLIVVLWLVITAWKNIGYI). Residues 89-93 (KEVKP) lie on the Cytoplasmic side of the membrane. A helical membrane pass occupies residues 94-114 (LCIISVAFLLIQALVGAAAVL). At 115–123 (WQQNDYVLA) the chain is on the extracellular side. Residues 124–144 (LHFGISLISFSSVFVLTLIIF) traverse the membrane as a helical segment. Position 125 (H125) interacts with heme o. Over 145–161 (DVDQKYEANKVHIDRKL) the chain is Cytoplasmic. A helical transmembrane segment spans residues 162–182 (RIYTWTMAICLYVGIYTGALV). The Extracellular segment spans residues 183 to 215 (RHTKSSLAYGSWPLPFNDLIPHTEQDWVQLAHR). Residue H214 coordinates heme b. The helical transmembrane segment at 216–236 (TLALIASISVFLAFNYAIKHY) threads the bilayer. Topologically, residues 237 to 244 (QNNRTIRY) are cytoplasmic. A helical transmembrane segment spans residues 245-265 (GYTAALLLIILQIVTGALSIF). The Extracellular portion of the chain corresponds to 266–270 (THVNL). Residues 271–291 (IIALLHALIITFEFGLIAYLI) form a helical membrane-spanning segment. H276 is a binding site for heme b. Topologically, residues 292-308 (VLLLRSQRVEKVKQNAY) are cytoplasmic.

It belongs to the COX15/CtaA family. Type 1 subfamily. As to quaternary structure, interacts with CtaB. Heme b serves as cofactor.

It localises to the cell membrane. It carries out the reaction Fe(II)-heme o + 2 A + H2O = Fe(II)-heme a + 2 AH2. Its pathway is porphyrin-containing compound metabolism; heme A biosynthesis; heme A from heme O: step 1/1. Catalyzes the conversion of heme O to heme A by two successive hydroxylations of the methyl group at C8. The first hydroxylation forms heme I, the second hydroxylation results in an unstable dihydroxymethyl group, which spontaneously dehydrates, resulting in the formyl group of heme A. In Staphylococcus carnosus (strain TM300), this protein is Heme A synthase.